The sequence spans 421 residues: UDP-N-acetylglucosamine 1-carboxyvinyltransferase 1 (421 aa).

22–23 (KN) provides a ligand contact to phosphoenolpyruvate. Arg-94 provides a ligand contact to UDP-N-acetyl-alpha-D-glucosamine. Catalysis depends on Cys-118, which acts as the Proton donor. Cys-118 is modified (2-(S-cysteinyl)pyruvic acid O-phosphothioketal). Residues 123-127 (RPIEL), Asp-310, and Val-332 each bind UDP-N-acetyl-alpha-D-glucosamine.

It belongs to the EPSP synthase family. MurA subfamily.

The protein resides in the cytoplasm. It catalyses the reaction phosphoenolpyruvate + UDP-N-acetyl-alpha-D-glucosamine = UDP-N-acetyl-3-O-(1-carboxyvinyl)-alpha-D-glucosamine + phosphate. It functions in the pathway cell wall biogenesis; peptidoglycan biosynthesis. Its function is as follows. Cell wall formation. Adds enolpyruvyl to UDP-N-acetylglucosamine. The chain is UDP-N-acetylglucosamine 1-carboxyvinyltransferase 1 from Clostridium perfringens (strain 13 / Type A).